The chain runs to 987 residues: Eukaryotic translation initiation factor 3 subunit A (987 aa).

Residues 93–122 are a coiled coil; that stretch reads LHLATDKAEQARSQADALEEALDVDDLEAD. The 198-residue stretch at 316–513 folds into the PCI domain; it reads LQLIASSVVL…GVVIFGNLGI (198 aa). Coiled coils occupy residues 556–742 and 797–858; these read TVEK…EKNR and LKIE…REEL. Positions 808–859 are enriched in basic and acidic residues; that stretch reads QEEEEARKQEEAERLKKVEAERKANLDKAFEKQRQREIELEEKSRREREELL. The segment at 808–987 is disordered; it reads QEEEEARKQE…GSSRPRPTQR (180 aa). Low complexity predominate over residues 872–894; the sequence is PTVTPVGTTAPAAAAAAAGAPAA. Polar residues-rich tracts occupy residues 905–916 and 976–987; these read TEVSGPSAPTSS and TFGSSRPRPTQR.

It belongs to the eIF-3 subunit A family. As to quaternary structure, component of the eukaryotic translation initiation factor 3 (eIF-3) complex. Binds to the translation initiation factor TIF3H1.

It is found in the cytoplasm. In terms of biological role, RNA-binding component of the eukaryotic translation initiation factor 3 (eIF-3) complex, which is involved in protein synthesis of a specialized repertoire of mRNAs and, together with other initiation factors, stimulates binding of mRNA and methionyl-tRNAi to the 40S ribosome. The eIF-3 complex specifically targets and initiates translation of a subset of mRNAs involved in cell proliferation. The polypeptide is Eukaryotic translation initiation factor 3 subunit A (TIF3A1) (Arabidopsis thaliana (Mouse-ear cress)).